The chain runs to 314 residues: Probable cell division protein WhiA (314 aa).

The H-T-H motif DNA-binding region spans 274-308; that stretch reads SLKELGEMVSTGTISKSGVNHRLRKLNELADKIRS.

This sequence belongs to the WhiA family.

Involved in cell division and chromosome segregation. The chain is Probable cell division protein WhiA from Staphylococcus carnosus (strain TM300).